A 636-amino-acid chain; its full sequence is Bifunctional phosphonoacetaldehyde hydrolase/aminoethylphosphonate transaminase (636 aa).

Residues 1–276 are phosphonoacetaldehyde hydrolase; sequence MKKIYGEKIK…IKSDFVPEND (276 aa). Aspartate 15 acts as the Nucleophile in catalysis. Residues aspartate 15 and alanine 17 each contribute to the Mg(2+) site. Lysine 56 acts as the Schiff-base intermediate with substrate in catalysis. Residue aspartate 189 coordinates Mg(2+). The tract at residues 277 to 636 is 2-aminoethylphosphonate--pyruvate transaminase; that stretch reads YILLTPGPLS…ADVIEKFINR (360 aa). N6-(pyridoxal phosphate)lysine is present on lysine 465.

In the N-terminal section; belongs to the HAD-like hydrolase superfamily. PhnX family. This sequence in the C-terminal section; belongs to the class-V pyridoxal-phosphate-dependent aminotransferase family. PhnW subfamily. In terms of assembly, homodimer. Mg(2+) serves as cofactor. The cofactor is pyridoxal 5'-phosphate.

It carries out the reaction (2-aminoethyl)phosphonate + pyruvate = phosphonoacetaldehyde + L-alanine. It catalyses the reaction phosphonoacetaldehyde + H2O = acetaldehyde + phosphate + H(+). Its function is as follows. Involved in phosphonate degradation. The polypeptide is Bifunctional phosphonoacetaldehyde hydrolase/aminoethylphosphonate transaminase (phnXW) (Clostridioides difficile (strain 630) (Peptoclostridium difficile)).